The following is a 434-amino-acid chain: Serine--tRNA ligase (434 aa).

237 to 239 (TAE) contributes to the L-serine binding site. ATP is bound at residue 268 to 270 (RAE). Glu291 serves as a coordination point for L-serine. 358–361 (EISS) is a binding site for ATP. Ser393 serves as a coordination point for L-serine.

This sequence belongs to the class-II aminoacyl-tRNA synthetase family. Type-1 seryl-tRNA synthetase subfamily. In terms of assembly, homodimer. The tRNA molecule binds across the dimer.

The protein localises to the cytoplasm. The catalysed reaction is tRNA(Ser) + L-serine + ATP = L-seryl-tRNA(Ser) + AMP + diphosphate + H(+). It carries out the reaction tRNA(Sec) + L-serine + ATP = L-seryl-tRNA(Sec) + AMP + diphosphate + H(+). It functions in the pathway aminoacyl-tRNA biosynthesis; selenocysteinyl-tRNA(Sec) biosynthesis; L-seryl-tRNA(Sec) from L-serine and tRNA(Sec): step 1/1. Its function is as follows. Catalyzes the attachment of serine to tRNA(Ser). Is also able to aminoacylate tRNA(Sec) with serine, to form the misacylated tRNA L-seryl-tRNA(Sec), which will be further converted into selenocysteinyl-tRNA(Sec). This Rhodopseudomonas palustris (strain BisB5) protein is Serine--tRNA ligase.